We begin with the raw amino-acid sequence, 653 residues long: Phospholipid-transporting ATPase VD (653 aa).

The Cytoplasmic portion of the chain corresponds to 1-375; sequence MACNLCYEAE…GHWCYTRLSN (375 aa). Residues Glu-14, Phe-56, Lys-80, Arg-124, Thr-204, Gly-205, Asp-206, 259 to 266, Arg-293, and Lys-299 contribute to the ATP site; that span reads GLIITGKT. Residue Asp-319 coordinates Mg(2+). Residues Asn-322 and Asp-323 each coordinate ATP. Asp-323 contributes to the Mg(2+) binding site. The helical transmembrane segment at 376 to 396 threads the bilayer; that stretch reads MILYFFYKNVAYVNLLFWYQF. Over 397-407 the chain is Exoplasmic loop; it reads FCGFSGTSMTD. Residues 408 to 428 form a helical membrane-spanning segment; the sequence is YWVLIFFNLLFTSAPPVIYGV. Over 429–458 the chain is Cytoplasmic; that stretch reads LEKDVSAETLMQLPELYKSGQKSEAYLPHT. The helical transmembrane segment at 459-480 threads the bilayer; that stretch reads FWITLLDAFYQSLVCFFVPYFT. Residues 481–487 are Exoplasmic loop-facing; it reads YQGSDID. A helical transmembrane segment spans residues 488–510; the sequence is IFAFGNPLNTAALFIILLHLIIE. Over 511–516 the chain is Cytoplasmic; it reads SKSLTW. A helical transmembrane segment spans residues 517 to 537; sequence IHMLVITGSILSYFLFAIVFG. Residues 538–555 are Exoplasmic loop-facing; that stretch reads AMCVTCNPPSNPYWIMQE. The chain crosses the membrane as a helical span at residues 556-580; the sequence is HVLDPVFYLVCILTTCIALLPRFVY. Topologically, residues 581 to 653 are cytoplasmic; sequence RGAGKMNQVT…AFEMARPCKD (73 aa).

It belongs to the cation transport ATPase (P-type) (TC 3.A.3) family. Type IV subfamily. In terms of assembly, component of a P4-ATPase flippase complex which consists of a catalytic alpha subunit ATP10A and an accessory beta subunit TMEM30A. Mg(2+) serves as cofactor. In terms of processing, autophosphorylated at the conserved aspartate of the P-type ATPase signature sequence.

It is found in the cell membrane. Its subcellular location is the endoplasmic reticulum membrane. The enzyme catalyses ATP + H2O + phospholipidSide 1 = ADP + phosphate + phospholipidSide 2.. It catalyses the reaction a beta-D-glucosyl-(1&lt;-&gt;1')-N-acylsphing-4-enine(out) + ATP + H2O = a beta-D-glucosyl-(1&lt;-&gt;1')-N-acylsphing-4-enine(in) + ADP + phosphate + H(+). In terms of biological role, catalytic component of a P4-ATPase flippase complex, which catalyzes the hydrolysis of ATP coupled to the transport of glucosylceramide (GlcCer) from the outer to the inner leaflet of the plasma membrane. This is Phospholipid-transporting ATPase VD (ATP10D) from Macaca fascicularis (Crab-eating macaque).